A 101-amino-acid chain; its full sequence is Fructose-bisphosphate aldolase (101 aa).

Residue Lys-11 is the Schiff-base intermediate with dihydroxyacetone-P of the active site.

This sequence belongs to the class I fructose-bisphosphate aldolase family.

It carries out the reaction beta-D-fructose 1,6-bisphosphate = D-glyceraldehyde 3-phosphate + dihydroxyacetone phosphate. It participates in carbohydrate degradation; glycolysis; D-glyceraldehyde 3-phosphate and glycerone phosphate from D-glucose: step 4/4. This Lymnaea stagnalis (Great pond snail) protein is Fructose-bisphosphate aldolase.